We begin with the raw amino-acid sequence, 154 residues long: Myoglobin (154 aa).

Residues 2–148 form the Globin domain; the sequence is GLSDQEWQQV…FRNDMASKYK (147 aa). Residue His-65 coordinates nitrite. Residue His-65 participates in O2 binding. Position 94 (His-94) interacts with heme b.

The protein belongs to the globin family. In terms of assembly, monomeric.

It localises to the cytoplasm. It is found in the sarcoplasm. It catalyses the reaction Fe(III)-heme b-[protein] + nitric oxide + H2O = Fe(II)-heme b-[protein] + nitrite + 2 H(+). The enzyme catalyses H2O2 + AH2 = A + 2 H2O. Its function is as follows. Monomeric heme protein which primary function is to store oxygen and facilitate its diffusion within muscle tissues. Reversibly binds oxygen through a pentacoordinated heme iron and enables its timely and efficient release as needed during periods of heightened demand. Depending on the oxidative conditions of tissues and cells, and in addition to its ability to bind oxygen, it also has a nitrite reductase activity whereby it regulates the production of bioactive nitric oxide. Under stress conditions, like hypoxia and anoxia, it also protects cells against reactive oxygen species thanks to its pseudoperoxidase activity. This is Myoglobin (MB) from Aethia pygmaea (Whiskered auklet).